The following is a 359-amino-acid chain: GTPase Obg (359 aa).

In terms of domain architecture, Obg spans 1 to 159; the sequence is MQFIDQAEIQ…RSLRLELKLL (159 aa). The region spanning 160-328 is the OBG-type G domain; it reads AEVGIIGLPN…LLHQIWQELE (169 aa). GTP contacts are provided by residues 166-173, 191-195, 213-216, 280-283, and 309-311; these read GLPNAGKS, FTTLV, DIPG, NKID, and SAI. Positions 173 and 193 each coordinate Mg(2+).

Belongs to the TRAFAC class OBG-HflX-like GTPase superfamily. OBG GTPase family. Monomer. Requires Mg(2+) as cofactor.

The protein localises to the cytoplasm. An essential GTPase which binds GTP, GDP and possibly (p)ppGpp with moderate affinity, with high nucleotide exchange rates and a fairly low GTP hydrolysis rate. Plays a role in control of the cell cycle, stress response, ribosome biogenesis and in those bacteria that undergo differentiation, in morphogenesis control. The sequence is that of GTPase Obg from Cyanothece sp. (strain PCC 7425 / ATCC 29141).